Here is a 615-residue protein sequence, read N- to C-terminus: Elongation factor 4 (615 aa).

Residues 14 to 196 (AMIRNFCIIA…EIVRQVPAPV (183 aa)) form the tr-type G domain. GTP is bound by residues 26 to 31 (DHGKST) and 143 to 146 (NKID).

The protein belongs to the TRAFAC class translation factor GTPase superfamily. Classic translation factor GTPase family. LepA subfamily.

It localises to the cell membrane. It catalyses the reaction GTP + H2O = GDP + phosphate + H(+). Required for accurate and efficient protein synthesis under certain stress conditions. May act as a fidelity factor of the translation reaction, by catalyzing a one-codon backward translocation of tRNAs on improperly translocated ribosomes. Back-translocation proceeds from a post-translocation (POST) complex to a pre-translocation (PRE) complex, thus giving elongation factor G a second chance to translocate the tRNAs correctly. Binds to ribosomes in a GTP-dependent manner. The polypeptide is Elongation factor 4 (Frankia alni (strain DSM 45986 / CECT 9034 / ACN14a)).